The primary structure comprises 175 residues: MGLENVPAGKALPDDIYVVIEIPANSDPIKYEVDKESGSLFVDRFMSTAMFYPANYGYVNHTLSSDGDPVDVLVPTPYPLQPGSVIRCRPVGVLKMTDEAGGDAKVVAVPHTKLTKEYDHIKDVNDLPALLKAQIQHFFESYKALEVGKWVKVEGWGDVNEARQEILDSFERAKK.

The substrate site is built by Lys30, Arg44, and Tyr56. Mg(2+)-binding residues include Asp66, Asp71, and Asp103. A substrate-binding site is contributed by Tyr142.

This sequence belongs to the PPase family. Homohexamer. Mg(2+) serves as cofactor.

It is found in the cytoplasm. The catalysed reaction is diphosphate + H2O = 2 phosphate + H(+). Catalyzes the hydrolysis of inorganic pyrophosphate (PPi) forming two phosphate ions. The sequence is that of Inorganic pyrophosphatase from Haemophilus ducreyi (strain 35000HP / ATCC 700724).